The chain runs to 141 residues: Hemoglobin subunit alpha-2 (141 aa).

In terms of domain architecture, Globin spans 1–141; sequence VLTEDDKNHV…VCKDLVSKYR (141 aa). H58 serves as a coordination point for O2. Heme b is bound at residue H87.

Belongs to the globin family. The major hemoglobin component (HbIII) is a heterotetramer of two alpha-2 chains and two beta-1 chains. In terms of tissue distribution, red blood cells.

Its function is as follows. Involved in oxygen transport from the lung to the various peripheral tissues. This Varanus albigularis (White-throated monitor) protein is Hemoglobin subunit alpha-2.